Reading from the N-terminus, the 64-residue chain is Large ribosomal subunit protein bL33c (64 aa).

The protein belongs to the bacterial ribosomal protein bL33 family.

The protein resides in the plastid. Its subcellular location is the organellar chromatophore. This chain is Large ribosomal subunit protein bL33c, found in Paulinella chromatophora.